A 250-amino-acid chain; its full sequence is Small ribosomal subunit protein uS3 (250 aa).

The KH type-2 domain maps to 39 to 107 (VREFLTKKLK…PAQVSINEID (69 aa)). The interval 215 to 250 (MNPAPAEERPAKRGRGRGEGQERRGRRGDRAADKGE) is disordered. The span at 220–250 (AEERPAKRGRGRGEGQERRGRRGDRAADKGE) shows a compositional bias: basic and acidic residues.

It belongs to the universal ribosomal protein uS3 family. In terms of assembly, part of the 30S ribosomal subunit. Forms a tight complex with proteins S10 and S14.

Functionally, binds the lower part of the 30S subunit head. Binds mRNA in the 70S ribosome, positioning it for translation. This is Small ribosomal subunit protein uS3 from Acinetobacter baumannii (strain SDF).